A 276-amino-acid polypeptide reads, in one-letter code: Ribosomal RNA small subunit methyltransferase A (276 aa).

S-adenosyl-L-methionine-binding residues include Asn27, Leu29, Gly54, Glu75, Asp101, and Asn122.

It belongs to the class I-like SAM-binding methyltransferase superfamily. rRNA adenine N(6)-methyltransferase family. RsmA subfamily.

It localises to the cytoplasm. The catalysed reaction is adenosine(1518)/adenosine(1519) in 16S rRNA + 4 S-adenosyl-L-methionine = N(6)-dimethyladenosine(1518)/N(6)-dimethyladenosine(1519) in 16S rRNA + 4 S-adenosyl-L-homocysteine + 4 H(+). Specifically dimethylates two adjacent adenosines (A1518 and A1519) in the loop of a conserved hairpin near the 3'-end of 16S rRNA in the 30S particle. May play a critical role in biogenesis of 30S subunits. This chain is Ribosomal RNA small subunit methyltransferase A, found in Brucella abortus biovar 1 (strain 9-941).